Here is a 375-residue protein sequence, read N- to C-terminus: SAP-like protein BP-73 (375 aa).

Disordered stretches follow at residues 46 to 113 (PNNH…VPGE), 130 to 233 (RARG…VKFQ), and 257 to 315 (TLEN…PSLQ). Residues 59–70 (HQKGGSARRKSK) show a composition bias toward basic residues. Acidic residues predominate over residues 76 to 86 (DDSENIDEFDT). Positions 88 to 109 (IMSSKNGPPISLTSNSRPQATS) are enriched in polar residues. Basic and acidic residues-rich tracts occupy residues 134–152 (KGKE…ERGS) and 163–186 (HSVD…KRSN). Residues 187–197 (ESGNKQNSSIF) are compositionally biased toward polar residues. Residues 295-311 (DEPDASDTDEPSGEYDE) are compositionally biased toward acidic residues. The interaction with WAXY stretch occupies residues 338–375 (DLSTLKVTELRELAKSRGIKGYSKMKKNDLVELLSNMA).

Binds to the DNA in the promoter region of WAXY containing the sequence 5'-ACGCACGCTAACGTGA-3'. As to expression, expressed in tissues with high cell division activities: in root tips, stem node, panicle, flower and immature seed. Weakly expressed in root and leaf.

Functionally, may regulate cell proliferation and plant growth. In Oryza sativa subsp. japonica (Rice), this protein is SAP-like protein BP-73 (BP-73).